The sequence spans 157 residues: Endoribonuclease YbeY (157 aa).

Positions 118, 122, and 128 each coordinate Zn(2+).

It belongs to the endoribonuclease YbeY family. It depends on Zn(2+) as a cofactor.

The protein localises to the cytoplasm. Single strand-specific metallo-endoribonuclease involved in late-stage 70S ribosome quality control and in maturation of the 3' terminus of the 16S rRNA. This is Endoribonuclease YbeY from Shewanella loihica (strain ATCC BAA-1088 / PV-4).